Here is a 37-residue protein sequence, read N- to C-terminus: Large ribosomal subunit protein bL36 (37 aa).

The protein belongs to the bacterial ribosomal protein bL36 family.

The chain is Large ribosomal subunit protein bL36 from Acidovorax ebreus (strain TPSY) (Diaphorobacter sp. (strain TPSY)).